We begin with the raw amino-acid sequence, 485 residues long: Peroxisomal catalase (485 aa).

Residues His53 and Asn126 contribute to the active site. Residue Tyr336 participates in heme binding.

This sequence belongs to the catalase family. As to quaternary structure, homotetramer. Requires heme as cofactor.

The protein resides in the peroxisome matrix. It carries out the reaction 2 H2O2 = O2 + 2 H2O. Catalyzes the degradation of hydrogen peroxide (H(2)O(2)) generated by peroxisomal oxidases to water and oxygen, thereby protecting cells from the toxic effects of hydrogen peroxide. The chain is Peroxisomal catalase (CAT1) from Candida albicans (strain SC5314 / ATCC MYA-2876) (Yeast).